We begin with the raw amino-acid sequence, 943 residues long: Calcium-activated chloride channel regulator 2 (943 aa).

Positions 1–31 are cleaved as a signal peptide; it reads MTQRSIAGPICNLKFVTLLVALSSELPFLGA. Residues 32-901 are Extracellular-facing; that stretch reads GVQLQDNGYN…SDPVPARDYL (870 aa). Residues 54–205 form a metalloprotease domain region; that stretch reads NQNLISNIKE…CSSDITGIFV (152 aa). Residues N74 and N150 are each glycosylated (N-linked (GlcNAc...) asparagine). Residue H164 participates in Zn(2+) binding. The active site involves E165. Zn(2+)-binding residues include H168 and D175. N-linked (GlcNAc...) asparagine glycosylation occurs at N231. A VWFA domain is found at 311–483; sequence VVCLVLDVSS…NSMIDAFSRI (173 aa). 2 N-linked (GlcNAc...) asparagine glycosylation sites follow: N522 and N822. A helical membrane pass occupies residues 902–922; sequence ILKGVLTAMGLIGIICLIIVV. The Cytoplasmic segment spans residues 923–943; that stretch reads THHTLSRKKRADKKENGTKLL.

The protein belongs to the CLCR family. In terms of processing, the 141 kDa mature form is autoproteolytically cleaved by the metalloprotease domain, producing a 109 kDa form and a 35 kDa form. The cleavage is necessary for calcium-activated chloride channel (CaCC) activation activity. Post-translationally, N-glycosylated. Expressed in cornea, skin, vagina, esophagus, and larynx (at protein level). Expressed in trachea and mammary gland. Weakly expressed in testis and kidney. Highly expressed in corneal epithelium, colon and trachea. Moderately expressed in brain, urogenital organs, bladder, uterus and prostate. Highly expressed in tissues containing stratified epithelium including cornea, esophagus, larynx, skin and vagina than those tissues which contain only epithelial monolayers. Expressed in normal breast epithelium but not in breast cancer. Highly expressed during epithelial stratification. Expressed in endothelial cells of lung. Expressed selectively in endothelia of small pulmonary arteries, arterioles, and subpleural and interlobular venules.

Its subcellular location is the cell membrane. It is found in the basal cell membrane. It localises to the cell junction. The protein resides in the secreted. Functionally, plays a role in modulating chloride current across the plasma membrane in a calcium-dependent manner, and cell adhesion. Involved in basal cell adhesion and/or stratification of squamous epithelia. May act as a tumor suppressor in breast and colorectal cancer. Plays a key role for cell adhesion in the beginning stages of lung metastasis via the binding to ITGB4. This Homo sapiens (Human) protein is Calcium-activated chloride channel regulator 2 (CLCA2).